Consider the following 105-residue polypeptide: Endogenous retrovirus group K member 104 Rec protein (105 aa).

Residues 1–43 (MNPSEMQRKAPPRRRRHCNRAPLTHKMNKMVTSEEEMKLPSTK) form a disordered region. Over residues 10–19 (APPRRRRHCN) the composition is skewed to basic residues. The Nuclear localization signal motif lies at 13–20 (RRRRHCNR). The Nuclear export signal signature appears at 50-59 (WAQLKKLTQL).

As to quaternary structure, forms homodimers, homotrimers, and homotetramers via a C-terminal domain. Associates with XPO1 and with ZNF145.

Its subcellular location is the cytoplasm. It localises to the nucleus. The protein resides in the nucleolus. Retroviral replication requires the nuclear export and translation of unspliced, singly-spliced and multiply-spliced derivatives of the initial genomic transcript. Rec interacts with a highly structured RNA element (RcRE) present in the viral 3'LTR and recruits the cellular nuclear export machinery. This permits export to the cytoplasm of unspliced genomic or incompletely spliced subgenomic viral transcripts. The sequence is that of Endogenous retrovirus group K member 104 Rec protein (HERV-K104) from Homo sapiens (Human).